We begin with the raw amino-acid sequence, 626 residues long: Interferon-induced GTP-binding protein MxC (626 aa).

In terms of domain architecture, Dynamin-type G spans 40–313; that stretch reads DLNLPAIAVI…LVEHIAKNVP (274 aa). Residues 50 to 57 are G1 motif; sequence GDQSSGKS. GTP is bound at residue 50–57; the sequence is GDQSSGKS. Residues 75-77 are G2 motif; the sequence is VTR. The interval 151-154 is G3 motif; that stretch reads DLPG. Residues 151–155 and 220–223 each bind GTP; these read DLPGI and TKPD. The interval 220 to 223 is G4 motif; that stretch reads TKPD. The segment at 252–255 is G5 motif; it reads KCRG. The 91-residue stretch at 534–624 folds into the GED domain; it reads LRETAFHLTS…ALPKVVHSAN (91 aa).

It belongs to the TRAFAC class dynamin-like GTPase superfamily. Dynamin/Fzo/YdjA family.

Its subcellular location is the cytoplasm. In Danio rerio (Zebrafish), this protein is Interferon-induced GTP-binding protein MxC (mxc).